The primary structure comprises 692 residues: DNA ligase (692 aa).

NAD(+) is bound by residues D40 to D44, S89 to L90, and E121. K123 functions as the N6-AMP-lysine intermediate in the catalytic mechanism. The NAD(+) site is built by R144, E181, K297, and K321. 4 residues coordinate Zn(2+): C415, C417, C439, and C445. Residues K614–S692 form the BRCT domain.

It belongs to the NAD-dependent DNA ligase family. LigA subfamily. The cofactor is Mg(2+). Requires Mn(2+) as cofactor.

It catalyses the reaction NAD(+) + (deoxyribonucleotide)n-3'-hydroxyl + 5'-phospho-(deoxyribonucleotide)m = (deoxyribonucleotide)n+m + AMP + beta-nicotinamide D-nucleotide.. Functionally, DNA ligase that catalyzes the formation of phosphodiester linkages between 5'-phosphoryl and 3'-hydroxyl groups in double-stranded DNA using NAD as a coenzyme and as the energy source for the reaction. It is essential for DNA replication and repair of damaged DNA. This is DNA ligase from Phenylobacterium zucineum (strain HLK1).